The chain runs to 455 residues: MFS-type transporter SLC18B1 (455 aa).

Methionine 1 bears the N-acetylmethionine mark. Residues 1 to 26 (MDTAGPPAPAGTEGDGPGGSTGETSR) form a disordered region. The Cytoplasmic portion of the chain corresponds to 1-32 (MDTAGPPAPAGTEGDGPGGSTGETSRRLSKEQ). A Phosphoserine modification is found at serine 20. A helical membrane pass occupies residues 33–53 (IFVLVSAASMNLGCMMTYSIL). At 54-69 (GPFFPKEAEKKGASNT) the chain is on the extracellular side. The chain crosses the membrane as a helical span at residues 70–90 (TIGMIFGCYALFELLASLVFG). The Cytoplasmic segment spans residues 91-99 (KYLVHIGAK). Residues 100-120 (FMFIAGMFVSGGVTILFGVLD) traverse the membrane as a helical segment. Residues 121-126 (QLPEGP) are Extracellular-facing. Residues 127-147 (IFIAMCFLVRIVDAIGFGAAI) traverse the membrane as a helical segment. Topologically, residues 148-166 (TASSSILAKAFPNNVATVM) are cytoplasmic. The chain crosses the membrane as a helical span at residues 167–187 (GSLEVFSGLGLVAGPPLGGLL). Over 188–194 (YQSFGYE) the chain is Extracellular. A helical membrane pass occupies residues 195-215 (VPFIFLGCIVLLMIPLNLCIL). Topologically, residues 216 to 232 (PSYESDAGKQSFWKLVT) are cytoplasmic. The chain crosses the membrane as a helical span at residues 233–253 (LPKIGLIAFVIISLSSCFGFL). Topologically, residues 254 to 271 (DPTLSLFVMKKFSLSTGY) are extracellular. A helical membrane pass occupies residues 272-292 (VGLVFLGLSLSYAISSPLFGL). At 293-303 (LSDKMPNLRKW) the chain is on the cytoplasmic side. The chain crosses the membrane as a helical span at residues 304-324 (FLVFGNLITAGCYMLLGPIPL). The Extracellular portion of the chain corresponds to 325-330 (LHIKSQ). The chain crosses the membrane as a helical span at residues 331–351 (LWLLVLVLVINGVSAGMSIIP). At 352–376 (TFPEMLSCAYANGFEDGISTLGLVS) the chain is on the cytoplasmic side. The helical transmembrane segment at 377–397 (GLFGAMWSVGAFMGPILGGFL) threads the bilayer. The Extracellular segment spans residues 398-406 (CEKIGFEWA). Residues 407 to 427 (AAIQGLWTLLSGVAMALFYLW) form a helical membrane-spanning segment. The Cytoplasmic portion of the chain corresponds to 428–455 (EDSTMRRSKAQNILGTEEEQAALLPNDT).

Expressed in brain structures, particularly in hippocampus, cortex, and cerebellum (at protein level). Expressed in astrocytes and hippocampal neurons (at protein level). Expressed in peritoneal mast cells.

The protein localises to the cytoplasmic vesicle. It is found in the secretory vesicle membrane. The protein resides in the secretory vesicle. Its subcellular location is the synaptic vesicle membrane. It catalyses the reaction spermine(in) + n H(+)(out) = spermine(out) + n H(+)(in). The enzyme catalyses spermidine(in) + n H(+)(out) = spermidine(out) + n H(+)(in). It carries out the reaction serotonin(in) + n H(+)(out) = serotonin(out) + n H(+)(in). Its function is as follows. Proton-coupled polyamine antiporter involved in the translocation of polyamines from cytosol into secretory vesicles prior to their release via exocytosis. Uses the electrochemical proton gradient generated by a V-type proton-pumping ATPase to couple the efflux of protons with the uptake of a polyamine molecule. Facilitates vesicular storage of spermine and spermidine in astrocytes with an impact on glutamatergic neuronal transmission and memory formation. Upon antigen stimulation, regulates polyamine accumulation and release in mast cell secretory granules, which in turn potentiates mast cell degranulation and histamine secretion. The chain is MFS-type transporter SLC18B1 from Rattus norvegicus (Rat).